Consider the following 914-residue polypeptide: Protein ECT2 (914 aa).

At Ala2 the chain carries N-acetylalanine. 2 BRCT domains span residues 171–260 and 266–354; these read LYCT…AAVD and FKVP…MYLY. Thr359 carries the phosphothreonine; by PKC/PRKCI modification. 2 positions are modified to phosphoserine: Ser367 and Ser370. Thr373 is subject to Phosphothreonine; by CDK1. Ser376 is subject to Phosphoserine. 2 consecutive short sequence motifs (nuclear localization signal) follow at residues 378 to 382 and 401 to 405; these read RKRRR and PRKRP. The disordered stretch occupies residues 388–449; the sequence is AQLSRETDVS…SKSSTPVPSK (62 aa). A compositionally biased stretch (polar residues) spans 418–429; that stretch reads DISNTPESSINY. The segment covering 432–449 has biased composition (low complexity); that stretch reads TPKSCTKSSKSSTPVPSK. Position 444 is a phosphothreonine; by CDK1 (Thr444). The 190-residue stretch at 452-641 folds into the DH domain; it reads ARWQVAKELY…KEVMTHINED (190 aa). A Glycyl lysine isopeptide (Lys-Gly) (interchain with G-Cter in SUMO2) cross-link involves residue Lys611. Residues 675-794 form the PH domain; it reads RVETISLGEH…KMLCRHVANT (120 aa). Phosphoserine occurs at positions 716 and 842. Thr846 carries the phosphothreonine; by CDK1 modification. Positions 857–884 are disordered; it reads TSHGSVEGRSPSSNDKHVMSRLSSTSSL. Ser861 and Ser866 each carry phosphoserine.

As to quaternary structure, homodimer. Homooligomer. Found in the centralspindlin complex. Interacts with NR1I3. Interacts (Thr-359 phosphorylated form) with PARD6A; the interaction is observed in cancer cells. Interacts (Thr-359 phosphorylated form) with PRKCI; the interaction is observed in cancer cells. Interacts with PKP4; the interaction is observed at the midbody. Interacts with RACGAP1/CYK4; the interaction is direct, occurs in a microtubule-dependent manner, occurs at anaphase and during cytokinesis, is inhibited in metaphase by phosphorylation of ECT2 on Thr-373 and is stimulated in early anaphase by dephosphorylation of ECT2 probably on Thr-373 through CDK1 activity. Interacts with PLK1; the interaction is stimulated upon its phosphorylation on Thr-444. Interacts with RHOA; the interaction results in allosteric activation of ECT2. Interacts with KIF23, PARD3, PARD6B and PRKCQ. Interacts with NEDD9/HEF1. In terms of processing, phosphorylated by PLK1 in vitro. Hyperphosphorylated during the G2 phase of the cell cycle. Phosphorylation at Thr-373 occurs during the G2/M phase, relieves its auto-inhibition status and stimulates its GEF activity. Phosphorylation at Thr-444 in G2/M phase is required for subsequent binding with PLK1 and Rho exchange activation. Dephosphorylated at the time of cytokinesis. Phosphorylation at Thr-359 is required for its transformation activity in cancer cells. In terms of tissue distribution, expressed in lung epithelial cells (at protein level). Expressed in squamous cell carcinoma, primary non-small cell lung cancer tumors and lung adenocarcinoma.

The protein resides in the nucleus. Its subcellular location is the cytoplasm. The protein localises to the cytoskeleton. It localises to the spindle. It is found in the cleavage furrow. The protein resides in the midbody. Its subcellular location is the cell junction. The protein localises to the tight junction. It localises to the microtubule organizing center. It is found in the centrosome. With respect to regulation, autoinhibited by the C-terminal PH domain which folds back and binds to the surface of the DH domain, blocking binding of RHOA to the catalytic center of the DH domain. The 2nd BRCT domain is also involved in inhibition, probably by helping to impede RHOA binding. Allosterically activated by binding of activated GTP-bound RHOA to the PH domain which stimulates the release of PH inhibition and promotes the binding of substrate RHOA to the catalytic center. Binding of phosphorylated RACGAP1 to the N-terminal BRCT domain-containing region also releases autoinhibition. Guanine nucleotide exchange factor (GEF) that catalyzes the exchange of GDP for GTP. Promotes guanine nucleotide exchange on the Rho family members of small GTPases, like RHOA, RHOC, RAC1 and CDC42. Required for signal transduction pathways involved in the regulation of cytokinesis. Component of the centralspindlin complex that serves as a microtubule-dependent and Rho-mediated signaling required for the myosin contractile ring formation during the cell cycle cytokinesis. Regulates the translocation of RHOA from the central spindle to the equatorial region. Plays a role in the control of mitotic spindle assembly; regulates the activation of CDC42 in metaphase for the process of spindle fibers attachment to kinetochores before chromosome congression. Involved in the regulation of epithelial cell polarity; participates in the formation of epithelial tight junctions in a polarity complex PARD3-PARD6-protein kinase PRKCQ-dependent manner. Plays a role in the regulation of neurite outgrowth. Inhibits phenobarbital (PB)-induced NR1I3 nuclear translocation. Stimulates the activity of RAC1 through its association with the oncogenic PARD6A-PRKCI complex in cancer cells, thereby acting to coordinately drive tumor cell proliferation and invasion. Also stimulates genotoxic stress-induced RHOB activity in breast cancer cells leading to their cell death. This is Protein ECT2 from Homo sapiens (Human).